Here is a 122-residue protein sequence, read N- to C-terminus: Protein translocase subunit SecE (122 aa).

3 helical membrane-spanning segments follow: residues 14 to 34, 38 to 58, and 93 to 113; these read LLKWLLVAVLVVVAVVGNQYF, PILYRVLGILVLAVIAAFLAL, and LIVVAVVLVMALLLWGLDSLL.

Belongs to the SecE/SEC61-gamma family. In terms of assembly, component of the Sec protein translocase complex. Heterotrimer consisting of SecY, SecE and SecG subunits. The heterotrimers can form oligomers, although 1 heterotrimer is thought to be able to translocate proteins. Interacts with the ribosome. Interacts with SecDF, and other proteins may be involved. Interacts with SecA.

The protein resides in the cell inner membrane. Essential subunit of the Sec protein translocation channel SecYEG. Clamps together the 2 halves of SecY. May contact the channel plug during translocation. The chain is Protein translocase subunit SecE from Pseudomonas aeruginosa (strain ATCC 15692 / DSM 22644 / CIP 104116 / JCM 14847 / LMG 12228 / 1C / PRS 101 / PAO1).